Here is a 268-residue protein sequence, read N- to C-terminus: 5'-nucleotidase SurE (268 aa).

Residues aspartate 24, aspartate 25, serine 55, and asparagine 111 each contribute to the a divalent metal cation site.

It belongs to the SurE nucleotidase family. A divalent metal cation serves as cofactor.

The protein localises to the cytoplasm. It catalyses the reaction a ribonucleoside 5'-phosphate + H2O = a ribonucleoside + phosphate. Nucleotidase that shows phosphatase activity on nucleoside 5'-monophosphates. The sequence is that of 5'-nucleotidase SurE from Deinococcus radiodurans (strain ATCC 13939 / DSM 20539 / JCM 16871 / CCUG 27074 / LMG 4051 / NBRC 15346 / NCIMB 9279 / VKM B-1422 / R1).